Consider the following 138-residue polypeptide: Large ribosomal subunit protein bL19 (138 aa).

Belongs to the bacterial ribosomal protein bL19 family.

Functionally, this protein is located at the 30S-50S ribosomal subunit interface and may play a role in the structure and function of the aminoacyl-tRNA binding site. The polypeptide is Large ribosomal subunit protein bL19 (Rickettsia massiliae (strain Mtu5)).